Here is a 502-residue protein sequence, read N- to C-terminus: Hexose transporter 1 (502 aa).

The Cytoplasmic segment spans residues 1–26 (MKKSSKEISSSQSLKNGGSDHFFNTS). A helical membrane pass occupies residues 27–47 (LMYVLAACLASFIFGYQVSVL). Residues 48 to 76 (NTIKNFIVIEFGWCTGNKVECDDSTLKSS) are Extracellular-facing. An intrachain disulfide couples cysteine 61 to cysteine 68. The helical transmembrane segment at 77–97 (FLLASVFIGAVVGSGFSGYLV) threads the bilayer. The Cytoplasmic segment spans residues 98–102 (QHGRR). The helical transmembrane segment at 103–123 (FSLLVIYNFFILVSILTSITH) threads the bilayer. Residues 124–132 (HFHTILFSR) are Extracellular-facing. The helical transmembrane segment at 133–153 (LLSGFGIGLITVSVPMYISEM) threads the bilayer. Topologically, residues 154 to 163 (THKDKKGAYG) are cytoplasmic. Residues 164 to 184 (VLHQLFITFGIFVAVLLGMAM) traverse the membrane as a helical segment. Glutamine 167 contacts alpha-D-glucose. Beta-D-glucose is bound at residue glutamine 167. At 185-205 (GEAPDAKSVDALGEFQKIWWR) the chain is on the extracellular side. Residues 206–226 (LMFFFPCLISILGIVLLTFFY) form a helical membrane-spanning segment. Residues 227–291 (KEETPYYLFE…RAMQIPSYRN (65 aa)) are Cytoplasmic-facing. A helical transmembrane segment spans residues 292-312 (VILLGCILSGLQQFTGINVLV). Alpha-D-glucose-binding residues include glutamine 303, glutamine 304, and asparagine 309. Glutamine 303 serves as a coordination point for beta-D-glucose. A beta-D-glucose-binding site is contributed by asparagine 309. At 313 to 329 (SNSNELYKEFLSNKLIT) the chain is on the extracellular side. A helical membrane pass occupies residues 330–350 (TLSVIMTVVNFLMTFPAIYIV). A beta-D-glucose-binding site is contributed by asparagine 339. At 351-356 (EKLGRK) the chain is on the cytoplasmic side. The chain crosses the membrane as a helical span at residues 357–377 (TLLLCGCAGVICAFLPTAIAN). Over 378-390 (QIDSTSAFVKNLS) the chain is Extracellular. A helical membrane pass occupies residues 391–411 (IAATFVMIISFAVSYGPVLWI). Tryptophan 410 is an alpha-D-glucose binding site. Over 412–427 (YLHEMFPSEIKDSAAS) the chain is Cytoplasmic. Residues 428–448 (LASLVNWVCAIIVVFPSDIII) form a helical membrane-spanning segment. At 449-453 (KKSPT) the chain is on the extracellular side. The helical transmembrane segment at 454 to 474 (ILFFIFSGMSILSFLFIFFFI) threads the bilayer. Topologically, residues 475-502 (KETKGGEIGTSPYITMEERQKHMGKSAV) are cytoplasmic.

The protein belongs to the major facilitator superfamily. Sugar transporter (TC 2.A.1.1) family. As to quaternary structure, homodimer.

The protein localises to the cell membrane. The catalysed reaction is D-glucose(out) = D-glucose(in). The enzyme catalyses D-fructose(out) = D-fructose(in). It carries out the reaction D-galactose(in) = D-galactose(out). It catalyses the reaction D-mannose(out) = D-mannose(in). The catalysed reaction is D-glucosamine(out) = D-glucosamine(in). The enzyme catalyses D-xylose(out) = D-xylose(in). With respect to regulation, inhibited by compound 3361 (3-O-((undec-10-en)-1-yl)-D-glucose). Functionally, sodium-independent facilitative hexose transporter. Can transport D-glucose and D-fructose. Can transport D-mannose, D-galactose, D-xylose and D-glucosamine. This chain is Hexose transporter 1, found in Plasmodium vivax (strain Brazil I).